We begin with the raw amino-acid sequence, 535 residues long: Dynein axonemal assembly factor 8 (535 aa).

5 disordered regions span residues A112 to R215, R228 to P267, P344 to R380, T395 to C444, and I461 to L535. Over residues R125 to R139 the composition is skewed to basic and acidic residues. Positions G166–S175 are enriched in polar residues. Position 175 is a phosphoserine (S175). S362 carries the phosphoserine modification. A compositionally biased stretch (acidic residues) spans D415 to E424. A compositionally biased stretch (polar residues) spans S435–C444.

The protein localises to the dynein axonemal particle. It is found in the cytoplasm. Its function is as follows. In cyliated cells, dynein axonemal particle-specific protein required for deployment of ODA to the axoneme. Interacts with outer dynein arm (ODA) subunits. The sequence is that of Dynein axonemal assembly factor 8 (DNAAF8) from Macaca fascicularis (Crab-eating macaque).